A 603-amino-acid chain; its full sequence is NAD 5'-nucleotidase (603 aa).

A signal peptide spans Met-1 to Ala-25. Asp-44, His-46, Asp-94, Asn-126, and His-227 together coordinate Zn(2+). Residues Arg-397, Arg-437, Phe-456, and Tyr-540–Asp-546 each bind substrate.

The protein belongs to the 5'-nucleotidase family. The cofactor is Zn(2+).

It is found in the periplasm. The catalysed reaction is a ribonucleoside 5'-phosphate + H2O = a ribonucleoside + phosphate. Functionally, degrades NAD into adenosine and nicotinamide riboside, the latter being subsequently internalized by a specific permease. Also endowed with NAD(P) pyrophosphatase activity. Exhibits a broad substrate specificity, recognizing either mono- or dinucleotide nicotinamides and different adenosine phosphates with a maximal activity on 5'-adenosine monophosphate. This chain is NAD 5'-nucleotidase, found in Haemophilus influenzae (strain ATCC 51907 / DSM 11121 / KW20 / Rd).